Reading from the N-terminus, the 291-residue chain is Bifunctional protein FolD (291 aa).

NADP(+) is bound by residues 166–168 (GAS) and Ile-232.

The protein belongs to the tetrahydrofolate dehydrogenase/cyclohydrolase family. Homodimer.

It catalyses the reaction (6R)-5,10-methylene-5,6,7,8-tetrahydrofolate + NADP(+) = (6R)-5,10-methenyltetrahydrofolate + NADPH. It carries out the reaction (6R)-5,10-methenyltetrahydrofolate + H2O = (6R)-10-formyltetrahydrofolate + H(+). It functions in the pathway one-carbon metabolism; tetrahydrofolate interconversion. Functionally, catalyzes the oxidation of 5,10-methylenetetrahydrofolate to 5,10-methenyltetrahydrofolate and then the hydrolysis of 5,10-methenyltetrahydrofolate to 10-formyltetrahydrofolate. This is Bifunctional protein FolD from Photorhabdus laumondii subsp. laumondii (strain DSM 15139 / CIP 105565 / TT01) (Photorhabdus luminescens subsp. laumondii).